Reading from the N-terminus, the 300-residue chain is uncharacterized protein (300 aa).

The region spanning 10-67 is the HTH lysR-type domain; that stretch reads FDLNLLVIFECIYQHLSISKAAESLYITPSAVSQSLQRLRAQFNDPLFIRSGKGIAPT. A DNA-binding region (H-T-H motif) is located at residues 27 to 46; it reads ISKAAESLYITPSAVSQSLQ.

Belongs to the LysR transcriptional regulatory family.

This is an uncharacterized protein from Escherichia coli (strain K12).